Consider the following 225-residue polypeptide: ATP-dependent dethiobiotin synthetase BioD (225 aa).

12–17 (EVGKTY) provides a ligand contact to ATP. Threonine 16 is a binding site for Mg(2+). Residue lysine 37 is part of the active site. Serine 41 serves as a coordination point for substrate. Residues aspartate 52, 114–117 (EGAG), and 174–175 (NC) contribute to the ATP site. Residues aspartate 52 and glutamate 114 each coordinate Mg(2+).

This sequence belongs to the dethiobiotin synthetase family. As to quaternary structure, homodimer. The cofactor is Mg(2+).

The protein localises to the cytoplasm. It carries out the reaction (7R,8S)-7,8-diammoniononanoate + CO2 + ATP = (4R,5S)-dethiobiotin + ADP + phosphate + 3 H(+). Its pathway is cofactor biosynthesis; biotin biosynthesis; biotin from 7,8-diaminononanoate: step 1/2. In terms of biological role, catalyzes a mechanistically unusual reaction, the ATP-dependent insertion of CO2 between the N7 and N8 nitrogen atoms of 7,8-diaminopelargonic acid (DAPA, also called 7,8-diammoniononanoate) to form a ureido ring. The protein is ATP-dependent dethiobiotin synthetase BioD of Francisella tularensis subsp. mediasiatica (strain FSC147).